A 112-amino-acid polypeptide reads, in one-letter code: Transmembrane protein 14C (112 aa).

Transmembrane regions (helical) follow at residues 7 to 27 (VVPL…GGII), 32 to 52 (AGSV…GLGA), 62 to 82 (VWVF…RFYH), and 88 to 108 (PAGL…VSMF).

It belongs to the TMEM14 family.

The protein localises to the mitochondrion membrane. In terms of biological role, required for normal heme biosynthesis. In Homo sapiens (Human), this protein is Transmembrane protein 14C (TMEM14C).